The following is a 176-amino-acid chain: Shikimate kinase (176 aa).

ATP is bound at residue 17–24 (GMMGVGKS).

The protein belongs to the shikimate kinase family.

The protein resides in the cytoplasm. It carries out the reaction shikimate + ATP = 3-phosphoshikimate + ADP + H(+). It functions in the pathway metabolic intermediate biosynthesis; chorismate biosynthesis; chorismate from D-erythrose 4-phosphate and phosphoenolpyruvate: step 5/7. The sequence is that of Shikimate kinase from Zymomonas mobilis subsp. mobilis (strain ATCC 31821 / ZM4 / CP4).